The chain runs to 338 residues: POU domain, class 4, transcription factor 3 (338 aa).

A POU-IV box motif is present at residues 56–65; the sequence is RAEALAAVDI. Residues 179-256 form the POU-specific domain; sequence DVESDPRELE…VLQAWLEEAE (78 aa). Residues 274-333 constitute a DNA-binding region (homeobox); it reads RKRKRTSIAAPEKRSLEAYFAIQPRPSSEKIAAIAEKLDLKKNVVRVWFCNQRQKQKRMK.

This sequence belongs to the POU transcription factor family. Class-4 subfamily. In terms of assembly, interacts with ISL1. Brain.

The protein localises to the nucleus. It is found in the cytoplasm. Acts as a transcriptional activator. Acts by binding to sequences related to the consensus octamer motif 5'-ATGCAAAT-3' in the regulatory regions of its target genes. Involved in the auditory system development, required for terminal differentiation of hair cells in the inner ear. This Mus musculus (Mouse) protein is POU domain, class 4, transcription factor 3.